A 275-amino-acid chain; its full sequence is NH(3)-dependent NAD(+) synthetase (275 aa).

50 to 57 (GISGGVDS) contacts ATP. Aspartate 56 is a Mg(2+) binding site. Arginine 147 lines the deamido-NAD(+) pocket. Residue threonine 167 participates in ATP binding. Glutamate 172 contributes to the Mg(2+) binding site. Deamido-NAD(+)-binding residues include lysine 180 and aspartate 187. ATP is bound by residues lysine 196 and threonine 218. 267-268 (HK) provides a ligand contact to deamido-NAD(+).

This sequence belongs to the NAD synthetase family. In terms of assembly, homodimer.

The enzyme catalyses deamido-NAD(+) + NH4(+) + ATP = AMP + diphosphate + NAD(+) + H(+). Its pathway is cofactor biosynthesis; NAD(+) biosynthesis; NAD(+) from deamido-NAD(+) (ammonia route): step 1/1. Catalyzes the ATP-dependent amidation of deamido-NAD to form NAD. Uses ammonia as a nitrogen source. This Pseudomonas aeruginosa (strain UCBPP-PA14) protein is NH(3)-dependent NAD(+) synthetase.